Here is a 180-residue protein sequence, read N- to C-terminus: MNPAPNLVMIGPMGAGKSSIGRRIAKHFSLHFADTDHAIVERAGTNISAIFKYSGEPEFRRLEREVLHDLLNHENQLIATGGGTILDPENRRCMQERGFVVFLKINVNTQLERLAHDRYRPLLQQIDRKQVLSDLYATRQPLYQQIADMIVTTDHMSPNTATAQLILDLTAHWQKSSNAA.

14–19 lines the ATP pocket; it reads GAGKSS. Ser-18 lines the Mg(2+) pocket. Substrate contacts are provided by Asp-36, Arg-60, and Gly-82. Residue Arg-120 coordinates ATP. Arg-139 contacts substrate.

It belongs to the shikimate kinase family. In terms of assembly, monomer. Mg(2+) is required as a cofactor.

The protein localises to the cytoplasm. The catalysed reaction is shikimate + ATP = 3-phosphoshikimate + ADP + H(+). The protein operates within metabolic intermediate biosynthesis; chorismate biosynthesis; chorismate from D-erythrose 4-phosphate and phosphoenolpyruvate: step 5/7. In terms of biological role, catalyzes the specific phosphorylation of the 3-hydroxyl group of shikimic acid using ATP as a cosubstrate. The polypeptide is Shikimate kinase (Xylella fastidiosa (strain 9a5c)).